Reading from the N-terminus, the 580-residue chain is Type 3 secretion system translocon protein SctE (580 aa).

IpgC chaperone binding domain regions lie at residues 15 to 45 and 51 to 72; these read KILTSTELGDNTIQAANDAANKLFSLTIADL and INTTNAHSTSNILIPELKAPKS. The segment at 61-70 is mediates interaction with human MAD2L2; it reads NILIPELKAP. A coiled-coil region spans residues 104–224; sequence AWKSQQQARQ…MQLEKEIDSF (121 aa). Helical transmembrane passes span 313-333 and 399-419; these read ILGALLTIVSVVAAAFSGGAS and IGSILGAIAGALVLVAAVVLV.

Belongs to the SctE/SipB/YopB family. As to quaternary structure, the core secretion machinery of the T3SS is composed of approximately 20 different proteins, including cytoplasmic components, a base, an export apparatus and a needle. This subunit is involved in the formation of a pore, called the translocon, in host membrane. Interacts with IpaC/SctB. Interacts with the needle tip protein IpaD/SctA. Interacts with the molecular chaperone IpgC, which prevents premature association with IpaC/SctB within the cytoplasm of Shigella cells and protects IpaB/SctE from proteolysis. Interacts with the host protein ICE in the cytoplasm of infected macrophages. Interacts with human MAD2L2 in the G2/M phase of the cell cycle.

Its subcellular location is the secreted. It localises to the host membrane. The protein localises to the host cell. It is found in the host nucleus. With respect to regulation, interaction with the membrane is affected by the pH. IpaB/SctE is more efficient in destabilizing the membrane at pH 5.0 than at neutral pH. In terms of biological role, component of the type III secretion system (T3SS), also called injectisome, which is used to inject bacterial effector proteins into eukaryotic host cells. IpaB/SctE and IpaC/SctB are inserted into the host membrane where they form a pore and allow the translocation of effector proteins into the cytosol of target cells. Interaction with IpaD/SctA at needle tips leads to the formation of the MxiH/SctF-IpaD/SctA-IpaB/SctE ternary complex, which is essential for host cell sensing. Interaction of IpaB/SctE with host membrane lipids promotes recruitment of IpaC/SctB at the needle tip concomitant with translocon insertion into the host membrane and type III secretion induction. Its function is as follows. Required for efficient dissemination. Necessary for lysis of the two cellular membranes that surround bacteria in protrusions during cell-to-cell spread. Is sufficient to induce macrophage apoptosis through activation of the interleukin-1 beta converting enzyme (ICE) in infected macrophages. In epithelial cells, causes cell-cycle arrest by targeting host MAD2L2, an anaphase-promoting complex/cyclosome (APC) inhibitor. The chain is Type 3 secretion system translocon protein SctE from Shigella flexneri.